Consider the following 287-residue polypeptide: Ribonuclease Z (287 aa).

The Zn(2+) site is built by H64, H66, D68, H69, H124, D191, and H250. The active-site Proton acceptor is D68.

This sequence belongs to the RNase Z family. As to quaternary structure, homodimer. Requires Zn(2+) as cofactor.

The enzyme catalyses Endonucleolytic cleavage of RNA, removing extra 3' nucleotides from tRNA precursor, generating 3' termini of tRNAs. A 3'-hydroxy group is left at the tRNA terminus and a 5'-phosphoryl group is left at the trailer molecule.. Its function is as follows. Zinc phosphodiesterase, which displays some tRNA 3'-processing endonuclease activity. Probably involved in tRNA maturation, by removing a 3'-trailer from precursor tRNA. This chain is Ribonuclease Z, found in Pyrobaculum islandicum (strain DSM 4184 / JCM 9189 / GEO3).